A 339-amino-acid chain; its full sequence is DNA-directed RNA polymerase subunit alpha (339 aa).

The interval 1–235 (MTIQKNWQEL…DQLNVFVNFE (235 aa)) is alpha N-terminal domain (alpha-NTD). Residues 251–339 (FNPAFLKKVD…ELAKRFEDHY (89 aa)) are alpha C-terminal domain (alpha-CTD).

The protein belongs to the RNA polymerase alpha chain family. In terms of assembly, homodimer. The RNAP catalytic core consists of 2 alpha, 1 beta, 1 beta' and 1 omega subunit. When a sigma factor is associated with the core the holoenzyme is formed, which can initiate transcription.

The catalysed reaction is RNA(n) + a ribonucleoside 5'-triphosphate = RNA(n+1) + diphosphate. Functionally, DNA-dependent RNA polymerase catalyzes the transcription of DNA into RNA using the four ribonucleoside triphosphates as substrates. The protein is DNA-directed RNA polymerase subunit alpha of Rhodopseudomonas palustris (strain BisB18).